The following is a 138-amino-acid chain: uncharacterized protein (138 aa).

An N-terminal signal peptide occupies residues 1 to 37 (MNSTFTSQPLLNRSEPRVFKEFYRLVIGCNPAWQVMA).

This sequence to H.influenzae HI_1631.

This is an uncharacterized protein from Sinorhizobium fredii (strain NBRC 101917 / NGR234).